The following is a 293-amino-acid chain: Mating-type protein A-1 (293 aa).

The alpha box DNA-binding region spans alanine 42–arginine 97.

It belongs to the MATALPHA1 family.

It localises to the nucleus. Its function is as follows. Mating type proteins are sequence specific DNA-binding proteins that act as master switches in yeast differentiation by controlling gene expression in a cell type-specific fashion. Transcriptional activator that induces the transcription of A-specific genes like mating factor ccg-4. Required for mating as an A-cell and for blocking of heterokaryon formation (vegetative incompatibility). This is Mating-type protein A-1 (mtA-1) from Neurospora crassa (strain ATCC 24698 / 74-OR23-1A / CBS 708.71 / DSM 1257 / FGSC 987).